A 141-amino-acid chain; its full sequence is Large ribosomal subunit protein uL11 (141 aa).

Belongs to the universal ribosomal protein uL11 family. In terms of assembly, part of the ribosomal stalk of the 50S ribosomal subunit. Interacts with L10 and the large rRNA to form the base of the stalk. L10 forms an elongated spine to which L12 dimers bind in a sequential fashion forming a multimeric L10(L12)X complex. Post-translationally, one or more lysine residues are methylated.

In terms of biological role, forms part of the ribosomal stalk which helps the ribosome interact with GTP-bound translation factors. The polypeptide is Large ribosomal subunit protein uL11 (Streptococcus sanguinis (strain SK36)).